The sequence spans 109 residues: uncharacterized protein (109 aa).

An N-terminal signal peptide occupies residues M1 to A22. The interval A39–Q109 is disordered. Basic and acidic residues predominate over residues N41–Q109.

This is an uncharacterized protein from Shigella dysenteriae serotype 1 (strain Sd197).